We begin with the raw amino-acid sequence, 267 residues long: MEKIKVCVADDNRELVSLLSEYIEGQEDMEVIGVAYNGQECLSLFKEKDPDVLVLDIIMPHLDGLAVLERLRESDLKKQPNVIMLTAFGQEDVTKKAVDLGASYFILKPFDMENLVGHIRQVSGNASSVTHRAPSSQSSIIRSSQPEPKKKNLDASITSIIHEIGVPAHIKGYLYLREAISMVYNDIELLGSITKVLYPDIAKKFNTTASRVERAIRHAIEVAWSRGNIDSISSLFGYTVSMTKAKPTNSEFIAMVADKLRLEHKAS.

Residues 5-123 (KVCVADDNRE…NLVGHIRQVS (119 aa)) form the Response regulatory domain. Ca(2+)-binding residues include D10, D11, and D56. D56 bears the 4-aspartylphosphate mark. Residues 126 to 150 (ASSVTHRAPSSQSSIIRSSQPEPKK) form a disordered region. Low complexity predominate over residues 135–145 (SSQSSIIRSSQ). Residues 199–218 (PDIAKKFNTTASRVERAIRH) constitute a DNA-binding region (H-T-H motif).

As to quaternary structure, interacts with small protein YqaH, which is encoded in the skin prophage-like element. Ca(2+) is required as a cofactor. In terms of processing, phosphorylated by KinA and KinB.

It localises to the cytoplasm. Its function is as follows. May play the central regulatory role in sporulation. It may be an element of the effector pathway responsible for the activation of sporulation genes in response to nutritional stress. Spo0A may act in concert with Spo0H (a sigma factor) to control the expression of some genes that are critical to the sporulation process. Repressor of abrB, activator of the spoIIa operon. Binds the DNA sequence 5'-TGNCGAA-3' (0A box). In Bacillus subtilis (strain 168), this protein is Stage 0 sporulation protein A (spo0A).